Reading from the N-terminus, the 550-residue chain is Arginine--tRNA ligase (550 aa).

The 'HIGH' region motif lies at 130 to 140 (ANPTGPIHIGG).

This sequence belongs to the class-I aminoacyl-tRNA synthetase family. Monomer.

It localises to the cytoplasm. The catalysed reaction is tRNA(Arg) + L-arginine + ATP = L-arginyl-tRNA(Arg) + AMP + diphosphate. In Mycolicibacterium smegmatis (strain ATCC 700084 / mc(2)155) (Mycobacterium smegmatis), this protein is Arginine--tRNA ligase (argS).